The chain runs to 414 residues: Putative ankyrin repeat protein BB_B28 (414 aa).

ANK repeat units follow at residues 326–355 and 359–389; these read NGNP…NINL and NSQT…NPNI.

In Borreliella burgdorferi (strain ATCC 35210 / DSM 4680 / CIP 102532 / B31) (Borrelia burgdorferi), this protein is Putative ankyrin repeat protein BB_B28.